A 201-amino-acid chain; its full sequence is Adenylyl-sulfate kinase (201 aa).

35–42 (GLSGSGKS) contributes to the ATP binding site. S109 functions as the Phosphoserine intermediate in the catalytic mechanism.

It belongs to the APS kinase family.

It carries out the reaction adenosine 5'-phosphosulfate + ATP = 3'-phosphoadenylyl sulfate + ADP + H(+). The protein operates within sulfur metabolism; hydrogen sulfide biosynthesis; sulfite from sulfate: step 2/3. Functionally, catalyzes the synthesis of activated sulfate. This is Adenylyl-sulfate kinase from Escherichia coli O139:H28 (strain E24377A / ETEC).